The primary structure comprises 537 residues: Carbamoyl phosphate synthase large chain, C-terminal section (537 aa).

The interval 1–395 (MSKKVVILGS…AYYKAQLSAG (395 aa)) is carbamoyl phosphate synthetic domain. The 192-residue stretch at 122–313 (RELIIELGLK…LAKIATKVAI (192 aa)) folds into the ATP-grasp domain. 10 residues coordinate ATP: arginine 158, lysine 197, leucine 199, glutamate 204, glycine 229, valine 230, histidine 231, serine 232, glutamine 272, and glutamate 284. Residues glutamine 272, glutamate 284, and asparagine 286 each contribute to the Mg(2+) site. Mn(2+) contacts are provided by glutamine 272, glutamate 284, and asparagine 286. The MGS-like domain occupies 396 to 537 (YRLPEKGNLF…VHSLQEIYNI (142 aa)). Positions 396-537 (YRLPEKGNLF…VHSLQEIYNI (142 aa)) are allosteric domain.

Belongs to the CarB family. In terms of assembly, composed of two chains; the small (or glutamine) chain promotes the hydrolysis of glutamine to ammonia, which is used by the large (or ammonia) chain to synthesize carbamoyl phosphate. Tetramer of heterodimers (alpha,beta)4. It depends on Mg(2+) as a cofactor. Mn(2+) is required as a cofactor.

The catalysed reaction is hydrogencarbonate + L-glutamine + 2 ATP + H2O = carbamoyl phosphate + L-glutamate + 2 ADP + phosphate + 2 H(+). It catalyses the reaction hydrogencarbonate + NH4(+) + 2 ATP = carbamoyl phosphate + 2 ADP + phosphate + 2 H(+). It participates in amino-acid biosynthesis; L-arginine biosynthesis; carbamoyl phosphate from bicarbonate: step 1/1. The protein operates within pyrimidine metabolism; UMP biosynthesis via de novo pathway; (S)-dihydroorotate from bicarbonate: step 1/3. Its function is as follows. Large subunit of the glutamine-dependent carbamoyl phosphate synthetase (CPSase). CPSase catalyzes the formation of carbamoyl phosphate from the ammonia moiety of glutamine, carbonate, and phosphate donated by ATP, constituting the first step of 2 biosynthetic pathways, one leading to arginine and/or urea and the other to pyrimidine nucleotides. The large subunit (synthetase) binds the substrates ammonia (free or transferred from glutamine from the small subunit), hydrogencarbonate and ATP and carries out an ATP-coupled ligase reaction, activating hydrogencarbonate by forming carboxy phosphate which reacts with ammonia to form carbamoyl phosphate. The chain is Carbamoyl phosphate synthase large chain, C-terminal section (carB2) from Aquifex aeolicus (strain VF5).